Reading from the N-terminus, the 165-residue chain is Large ribosomal subunit protein uL11 (165 aa).

The residue at position 38 (serine 38) is a Phosphoserine. Lysine 40 participates in a covalent cross-link: Glycyl lysine isopeptide (Lys-Gly) (interchain with G-Cter in SUMO2). A Glycyl lysine isopeptide (Lys-Gly) (interchain with G-Cter in ubiquitin) cross-link involves residue lysine 48. N6-acetyllysine is present on lysine 54. Residue lysine 83 forms a Glycyl lysine isopeptide (Lys-Gly) (interchain with G-Cter in ubiquitin) linkage. Residue serine 165 is modified to Phosphoserine.

The protein belongs to the universal ribosomal protein uL11 family. As to quaternary structure, component of the large ribosomal subunit. Mature ribosomes consist of a small (40S) and a large (60S) subunit. The 40S subunit contains about 33 different proteins and 1 molecule of RNA (18S). The 60S subunit contains about 49 different proteins and 3 molecules of RNA (28S, 5.8S and 5S). Post-translationally, ubiquitinated at Lys-48 and Lys-83 by RNF14 and RNF25 in response to ribosome collisions (ribosome stalling).

Its subcellular location is the cytoplasm. Functionally, component of the large ribosomal subunit. The ribosome is a large ribonucleoprotein complex responsible for the synthesis of proteins in the cell. Binds directly to 26S ribosomal RNA. This chain is Large ribosomal subunit protein uL11 (RPL12), found in Chinchilla lanigera (Long-tailed chinchilla).